The sequence spans 553 residues: Flotillin family inner membrane protein YqiK (553 aa).

Over 1–9 (MDDIVNSVP) the chain is Periplasmic. Residues 10–30 (SWMFTAIIAVCILFIIGIIFA) form a helical membrane-spanning segment. Residues 31 to 553 (RLYRRASAEQ…STTPVEEKAE (523 aa)) are Cytoplasmic-facing.

This sequence belongs to the band 7/mec-2 family. Flotillin subfamily. Homooligomerizes.

It localises to the cell inner membrane. Its subcellular location is the membrane raft. In terms of biological role, found in membrane microdomains that may be equivalent to eukaryotic membrane rafts. FMMs are highly dynamic and increase in number as cells age. Flotillins are thought to be important factors in membrane fluidity. The sequence is that of Flotillin family inner membrane protein YqiK (yqiK) from Escherichia coli (strain K12).